The following is a 209-amino-acid chain: Uracil phosphoribosyltransferase (209 aa).

5-phospho-alpha-D-ribose 1-diphosphate-binding positions include arginine 79, arginine 104, and aspartate 131–serine 139. Uracil contacts are provided by residues isoleucine 194 and glycine 199–alanine 201. Aspartate 200 is a binding site for 5-phospho-alpha-D-ribose 1-diphosphate.

The protein belongs to the UPRTase family. It depends on Mg(2+) as a cofactor.

The enzyme catalyses UMP + diphosphate = 5-phospho-alpha-D-ribose 1-diphosphate + uracil. It functions in the pathway pyrimidine metabolism; UMP biosynthesis via salvage pathway; UMP from uracil: step 1/1. With respect to regulation, allosterically activated by GTP. In terms of biological role, catalyzes the conversion of uracil and 5-phospho-alpha-D-ribose 1-diphosphate (PRPP) to UMP and diphosphate. This Bacillus licheniformis (strain ATCC 14580 / DSM 13 / JCM 2505 / CCUG 7422 / NBRC 12200 / NCIMB 9375 / NCTC 10341 / NRRL NRS-1264 / Gibson 46) protein is Uracil phosphoribosyltransferase.